The following is a 401-amino-acid chain: MSEIISIKDINFKSGSKVFVRCDFNTPMDEFYNITDDRRIRSAIPTIRYILDQGCSVILASHLGRPKNGYEEKFSLLPVAKRLSRLIDREIIFANDVVGNDAKTKVAALKQGEVLLLENIRFEKGETKDDVALAKELSEYANYYVNDAFGVCHRAHSSVHAITKFYDEEHRAAGFLLIKEIEFARNLIKRPIRPFVAVVGGSKVSGKLQALTNLLPRVDKLIIGGGMAFTFLKAIGENIGNSLLEEDLIEEATNILKKGRELGVKIYLPVDVVAAQTFSAESAIKYVSTQEIPTGWMGLDIGPASVRLFREVLSDAQTIWWNGPMGVFEMDKFSKGSIKMSHAIAESFATTVVGGGDTADVVERAGDADEMTFISTGGGASLELIEGKELPGVKVLLKAES.

Substrate-binding positions include 23 to 25 (DFN), R39, 62 to 65 (HLGR), R121, and R154. ATP-binding positions include K207, G298, E329, and 355–358 (GGDT).

Belongs to the phosphoglycerate kinase family. In terms of assembly, monomer.

It is found in the cytoplasm. It catalyses the reaction (2R)-3-phosphoglycerate + ATP = (2R)-3-phospho-glyceroyl phosphate + ADP. Its pathway is carbohydrate degradation; glycolysis; pyruvate from D-glyceraldehyde 3-phosphate: step 2/5. The sequence is that of Phosphoglycerate kinase from Campylobacter fetus subsp. fetus (strain 82-40).